A 138-amino-acid chain; its full sequence is MEKTLSIIKPDAVERNLIGNIVKRFEDAGIKIVAMKLLKLSKAQAEAFYAVHKERPFYGELTDYMSSGPCVPMILEGEGVILKNREIMGATDPKEAAAGTIRADLAIDKEKNSVHGSDAPETAAQEIAFFFTEYELAG.

Positions 9, 57, 85, 91, 102, and 112 each coordinate ATP. The active-site Pros-phosphohistidine intermediate is the His115.

This sequence belongs to the NDK family. As to quaternary structure, homotetramer. It depends on Mg(2+) as a cofactor.

The protein resides in the cytoplasm. It catalyses the reaction a 2'-deoxyribonucleoside 5'-diphosphate + ATP = a 2'-deoxyribonucleoside 5'-triphosphate + ADP. It carries out the reaction a ribonucleoside 5'-diphosphate + ATP = a ribonucleoside 5'-triphosphate + ADP. In terms of biological role, major role in the synthesis of nucleoside triphosphates other than ATP. The ATP gamma phosphate is transferred to the NDP beta phosphate via a ping-pong mechanism, using a phosphorylated active-site intermediate. The polypeptide is Nucleoside diphosphate kinase (Desulfatibacillum aliphaticivorans).